Here is a 570-residue protein sequence, read N- to C-terminus: Spermatocyte protein spe-26 (570 aa).

Kelch repeat units follow at residues 244–291, 293–338, 341–393, 395–440, 442–487, and 489–535; these read VLII…IVDG, LYLF…SVVY, RIYV…VFEN, IYVS…NHGN, LLIV…SYKG, and LFSV…VAPN.

Testis, in both spermatogonial cells and spermatocytes.

The protein resides in the cytoplasm. It localises to the cytoskeleton. May play a role in the spermatocyte cytoskeleton, possibly interacting with actin. The chain is Spermatocyte protein spe-26 (spe-26) from Caenorhabditis elegans.